We begin with the raw amino-acid sequence, 462 residues long: Cysteine--tRNA ligase (462 aa).

Cys-28 contributes to the Zn(2+) binding site. The 'HIGH' region signature appears at 30-40 (MTVYDYCHIGH). Residues Cys-209, His-234, and Glu-238 each coordinate Zn(2+). A 'KMSKS' region motif is present at residues 266-270 (KMSKS). An ATP-binding site is contributed by Lys-269.

It belongs to the class-I aminoacyl-tRNA synthetase family. Monomer. Zn(2+) is required as a cofactor.

Its subcellular location is the cytoplasm. The enzyme catalyses tRNA(Cys) + L-cysteine + ATP = L-cysteinyl-tRNA(Cys) + AMP + diphosphate. This Pseudomonas fluorescens (strain SBW25) protein is Cysteine--tRNA ligase.